The following is a 507-amino-acid chain: MVTIRADEISNIIRERIEQYNREVTIVNTGTVLQVGDGIARIYGLDEVMAGELVEFEEGTIGIALNLESNNVGVVLMGDGLMIQEGSSVKATGKIAQIPVSEAYLGRVINALANPIDGRGKISASESRLIESPAPGIISRRSVYEPLQTGLIAIDSMIPIGRGQRELIIGDRQTGKTAVATDTILNQQGQNVICVYVAIGQKASSVAQVVTGLQERGAMEYTIVVAETADAPAALQYLAPYTGAALAEYFMYREQHTLIIYDDLSKQAQAYRQMSLLLRRPPGREAYPGDVFYLHSRLLERAAKLSSQLGEGSMTALPIVETQSGDVSAYIPTNVISITDGQIFLSADLFNAGIRPAINVGISVSRVGSAAQIKAMKQVAGKLKLELAQFAELEAFAQFSSDLDKATQNQLARGQRLRELLKQSQSAPLTVEEQVMTIYTGTNGYLDGLEIGQVRKFLVQLRTYLKTNKPQFQEIISSTKTLTAEAESVLKEGIQEQLERFLLQEKL.

Residue 170–177 (GDRQTGKT) participates in ATP binding. Phosphothreonine is present on threonine 257.

The protein belongs to the ATPase alpha/beta chains family. In terms of assembly, F-type ATPases have 2 components, CF(1) - the catalytic core - and CF(0) - the membrane proton channel. CF(1) has five subunits: alpha(3), beta(3), gamma(1), delta(1), epsilon(1). CF(0) has four main subunits: a, b, b' and c.

Its subcellular location is the plastid. It is found in the chloroplast thylakoid membrane. It carries out the reaction ATP + H2O + 4 H(+)(in) = ADP + phosphate + 5 H(+)(out). Functionally, produces ATP from ADP in the presence of a proton gradient across the membrane. The alpha chain is a regulatory subunit. The sequence is that of ATP synthase subunit alpha, chloroplastic from Barbarea verna (Land cress).